Here is a 322-residue protein sequence, read N- to C-terminus: Arginase-1 (322 aa).

Residues 1–27 (MSSKPQSIGVIGAPFSKGQPRGGVEEG) are disordered. The residue at position 7 (Ser-7) is a Phosphoserine. At Lys-17 the chain carries N6-succinyllysine. Ser-62 bears the Phosphoserine mark. Lys-75 carries the N6-succinyllysine modification. Mn(2+)-binding residues include His-101, Asp-124, His-126, and Asp-128. Residues 126 to 130 (HTDIN), 137 to 139 (TGN), and Asp-183 each bind substrate. At Ser-217 the chain carries Phosphoserine. Mn(2+) contacts are provided by Asp-232 and Asp-234. Residues Thr-246 and Glu-277 each contribute to the substrate site.

It belongs to the arginase family. In terms of assembly, homotrimer. Interacts with CMTM6. Mn(2+) is required as a cofactor.

The protein localises to the cytoplasm. It carries out the reaction L-arginine + H2O = urea + L-ornithine. It participates in nitrogen metabolism; urea cycle; L-ornithine and urea from L-arginine: step 1/1. This Bos taurus (Bovine) protein is Arginase-1 (ARG1).